The primary structure comprises 266 residues: NADP-dependent mannitol dehydrogenase (266 aa).

Positions 31, 33, 107, and 140 each coordinate NADP(+). Serine 159 acts as the Proton donor in catalysis. Positions 174, 178, 206, and 208 each coordinate NADP(+). The active-site Proton acceptor is tyrosine 174. Residue lysine 178 is the Lowers pKa of active site Tyr of the active site.

This sequence belongs to the short-chain dehydrogenases/reductases (SDR) family. Homotetramer.

It localises to the vacuole. It carries out the reaction D-mannitol + NADP(+) = D-fructose + NADPH + H(+). In Alternaria alternata (Alternaria rot fungus), this protein is NADP-dependent mannitol dehydrogenase.